Consider the following 346-residue polypeptide: MTEQLELFDVTIIGGGPAGMYTAFYSGMRDLKTKVLEYNESLGGKILLYPEKVIWDVGGLPPTRGEQLIQQLEKQAKTFEPEIALNQKITSFERDEHQNILLTAENGDRHLTKTLILAMGHGIPVQRKLEIEHADRYEVTNLYYTVQELKTFAGKRVVISGGGDSAVDWANALVPIAESVTVVHRRDMFGGHEKNVANMKASCARILTPHELTDLHGQGDKIDAVTIQHLETGEIERIETDAVIVNHGMKGDLSVLSEWGLKQGEWGLIEVNEKMETNLPGVYAVGDLCTHKSKVRLIAGTFVDGVNALNSAKLYIEPEAEKVAYVSSHNERFKEKNKELQTVGAR.

7 residues coordinate FAD: Glu-37, Lys-45, Tyr-49, Ile-89, Pro-124, Asp-287, and Ser-328.

This sequence belongs to the ferredoxin--NADP reductase type 2 family. As to quaternary structure, homodimer. FAD serves as cofactor.

The enzyme catalyses 2 reduced [2Fe-2S]-[ferredoxin] + NADP(+) + H(+) = 2 oxidized [2Fe-2S]-[ferredoxin] + NADPH. In Bacillus pumilus (strain SAFR-032), this protein is Ferredoxin--NADP reductase 1.